Reading from the N-terminus, the 1809-residue chain is Pyochelin synthetase PchF (1809 aa).

The condensation/cyclization stretch occupies residues 69–490; that stretch reads FPLTPVQAAY…GLLRRLAQSP (422 aa). Residues 520-915 form an adenylation region; it reads FAERALLTPD…GREDDQVKIR (396 aa). The Carrier domain occupies 1407–1488; sequence APADELESAL…GLAERLRSAP (82 aa). Ser-1442 carries the O-(pantetheine 4'-phosphoryl)serine modification. The tract at residues 1584 to 1797 is thioesterase; it reads LGRRYAEALH…FDCLGEALAQ (214 aa).

The protein belongs to the NRP synthetase family. Requires pantetheine 4'-phosphate as cofactor.

It carries out the reaction holo-[peptidyl-carrier protein] + L-cysteine + ATP = L-cysteinyl-[peptidyl-carrier protein] + AMP + diphosphate. The protein operates within siderophore biosynthesis. Involved in the biosynthesis of the siderophore pyochelin. Adenylates L-cysteine and loads it onto its peptidyl carrier domain via a thioester linkage to the phosphopanthetheine moiety. Then forms a peptide bond between the salicyl-thiazolinyl intermediate bound to the second carrier domain of PchE and the cysteine bound to its own peptidyl carrier domain to form the salicyl-thiazolinyl-cysteinyl-S-PCP2 intermediate. It subsequently cyclizes the C-terminal cysteine to form the second thiazoline heterocycle in the salicyl-thiazolinyl-thiazolinyl-S-PCP2 intermediate. When this intermediate is released by the action of a thioesterase, it produces the tricyclic acid hydroxyphenyl-thiazolyl-thiazolinyl-carboxylic acid (HPTT-COOH), an advanced intermediate containing the aryl-4,2-bis-heterocyclic skeleton of the bithiazoline class of siderophores. This Pseudomonas aeruginosa (strain UCBPP-PA14) protein is Pyochelin synthetase PchF.